Consider the following 144-residue polypeptide: Large ribosomal subunit protein uL16 (144 aa).

It belongs to the universal ribosomal protein uL16 family. In terms of assembly, part of the 50S ribosomal subunit.

Its function is as follows. Binds 23S rRNA and is also seen to make contacts with the A and possibly P site tRNAs. In Pediococcus pentosaceus (strain ATCC 25745 / CCUG 21536 / LMG 10740 / 183-1w), this protein is Large ribosomal subunit protein uL16.